A 464-amino-acid chain; its full sequence is Olfactomedin (464 aa).

The signal sequence occupies residues 1-16; that stretch reads MYICLLTLVLIHAAAA. 6 N-linked (GlcNAc...) asparagine glycosylation sites follow: Asn21, Asn85, Asn143, Asn228, Asn279, and Asn383. One can recognise an Olfactomedin-like domain in the interval 192 to 464; that stretch reads SCQHQGLAHI…LLHYDIALKP (273 aa). A disulfide bond links Cys193 and Cys394.

Oligomer; disulfide-linked. Post-translationally, most, if not all, of the six potential sites for N-glycosylation carry carbohydrate moieties of 8-10 sugar residues. Expressed exclusively in olfactory neuroepithelium.

It localises to the secreted. The protein localises to the extracellular space. In terms of biological role, may influence the maintenance, growth, or differentiation of chemosensory cilia on the apical dendrites of olfactory neurons. Major component of the extracellular matrix of the olfactory neuroepithelium. The protein is Olfactomedin of Aquarana catesbeiana (American bullfrog).